Consider the following 240-residue polypeptide: MSELPRGSTIRKDAGLYGYERALRRHGIEPIAGVDEAGRGACAGPLVAGAAILPPGKAGIVPGLADSKLLTERARERCYEQIVRRAVSWSVVVVSHEECDRLGMHVANVEALRRAVALLDLPPAYVLTDGFPVDGLGVPGLAVWKGDRVAACISAASVLAKVTRDRIMTELDASWPAYDFKTHKGYITEVHSAALTAHGPSPIHRMRFVNVRRAAGLEPLDPVQNGEEAVELVEVTEGTR.

The RNase H type-2 domain maps to 29 to 220 (EPIAGVDEAG…VRRAAGLEPL (192 aa)). Residues Asp-35, Glu-36, and Asp-129 each coordinate a divalent metal cation.

This sequence belongs to the RNase HII family. Mn(2+) serves as cofactor. Mg(2+) is required as a cofactor.

It is found in the cytoplasm. It carries out the reaction Endonucleolytic cleavage to 5'-phosphomonoester.. Functionally, endonuclease that specifically degrades the RNA of RNA-DNA hybrids. In Nocardioides sp. (strain ATCC BAA-499 / JS614), this protein is Ribonuclease HII.